We begin with the raw amino-acid sequence, 992 residues long: Probable translation initiation factor IF-2 (992 aa).

A DOD-type homing endonuclease domain is found at Lys-96–Ile-220. In terms of domain architecture, tr-type G spans Thr-399–Leu-616. Residues Asp-472–His-476 and Asn-526–Asp-529 contribute to the GTP site.

This sequence belongs to the TRAFAC class translation factor GTPase superfamily. Classic translation factor GTPase family. IF-2 subfamily. This protein undergoes a protein self splicing that involves a post-translational excision of the intervening region (intein) followed by peptide ligation.

Functionally, function in general translation initiation by promoting the binding of the formylmethionine-tRNA to ribosomes. Seems to function along with eIF-2. The sequence is that of Probable translation initiation factor IF-2 (infB) from Pyrococcus abyssi (strain GE5 / Orsay).